Consider the following 470-residue polypeptide: Peripherin (470 aa).

Residues Met1 to Gln99 form a head region. Tyr17 carries the 3'-nitrotyrosine modification. Phosphoserine is present on residues Ser28, Ser50, and Ser59. Positions Glu97–Ile407 constitute an IF rod domain. The interval Glu100–Ala132 is coil 1A. The tract at residues Arg133–Leu143 is linker 1. Positions Cys144–Leu239 are coil 1B. The linker 2 stretch occupies residues Gln240 to Thr262. A coil 2 region spans residues Ala263–Ser405. Tyr379 carries the post-translational modification 3'-nitrotyrosine. Residues Arg406 to Tyr470 are tail. A disordered region spans residues Asn447–Tyr470. A compositionally biased stretch (basic and acidic residues) spans Ser454–Tyr470. Tyr470 carries the phosphotyrosine modification.

Belongs to the intermediate filament family. As to quaternary structure, forms homodimers (in vitro). Homopolymerizes into a filamentous network (in vitro). Forms heterodimers with NEFL, NEFM or NEFH (in vitro). Interacts with DST (via C-terminus). Interacts with RAB7A; the interaction is direct. Interacts with PRKCE (via phorbol-ester/DAG-type 2 domain). Phosphorylated; phosphorylation increases after nerve injury in regenerating neurons. Expressed in the neurons of the outer hair cells in the organ of Corti and to a lesser extent in type I spiral ganglion cells.

It is found in the cytoplasm. The protein resides in the cytoskeleton. Its subcellular location is the cell projection. It localises to the axon. The protein localises to the perikaryon. In terms of biological role, class-III neuronal intermediate filament protein. May form an independent structural network without the involvement of other neurofilaments or may cooperate with the neuronal intermediate filament proteins NEFL, NEFH, NEFM and INA to form a filamentous network. Assembly of the neuronal intermediate filaments may be regulated by RAB7A. Plays a role in the development of unmyelinated sensory neurons. May be involved in axon elongation and axon regeneration after injury. Inhibits neurite extension in type II spiral ganglion neurons in the cochlea. The sequence is that of Peripherin (PRPH) from Homo sapiens (Human).